A 343-amino-acid chain; its full sequence is Phosphate acyltransferase (343 aa).

Belongs to the PlsX family. As to quaternary structure, homodimer. Probably interacts with PlsY.

It localises to the cytoplasm. The catalysed reaction is a fatty acyl-[ACP] + phosphate = an acyl phosphate + holo-[ACP]. The protein operates within lipid metabolism; phospholipid metabolism. Its function is as follows. Catalyzes the reversible formation of acyl-phosphate (acyl-PO(4)) from acyl-[acyl-carrier-protein] (acyl-ACP). This enzyme utilizes acyl-ACP as fatty acyl donor, but not acyl-CoA. The chain is Phosphate acyltransferase from Haemophilus ducreyi (strain 35000HP / ATCC 700724).